The following is a 236-amino-acid chain: uncharacterized protein (236 aa).

A helical membrane pass occupies residues 15 to 34; sequence GGMAHIISEAVIAGSIGLYF. Residues 36-71 adopt a coiled-coil conformation; sequence KKISALEQTVQELQSQLEVQNNQLQWLIQQQTRRLA. 2 disordered regions span residues 83–113 and 185–236; these read SPLP…FQFK and ATTQ…IDCE. 2 stretches are compositionally biased toward polar residues: residues 93–102 and 185–195; these read QQSTTTNAAG and ATTQVSTFSKP. Residues 225–236 are compositionally biased toward basic and acidic residues; sequence ALDKILNDIDCE.

It is found in the membrane. This is an uncharacterized protein from Aedes vexans (Inland floodwater mosquito).